Consider the following 231-residue polypeptide: 7-cyano-7-deazaguanine synthase (231 aa).

8–18 (FSGGQDSTTCL) serves as a coordination point for ATP. Residues Cys-188, Cys-197, Cys-200, and Cys-203 each coordinate Zn(2+).

Belongs to the QueC family. Zn(2+) is required as a cofactor.

It catalyses the reaction 7-carboxy-7-deazaguanine + NH4(+) + ATP = 7-cyano-7-deazaguanine + ADP + phosphate + H2O + H(+). Its pathway is purine metabolism; 7-cyano-7-deazaguanine biosynthesis. Functionally, catalyzes the ATP-dependent conversion of 7-carboxy-7-deazaguanine (CDG) to 7-cyano-7-deazaguanine (preQ(0)). This chain is 7-cyano-7-deazaguanine synthase, found in Sodalis glossinidius (strain morsitans).